A 172-amino-acid polypeptide reads, in one-letter code: Major exported protein (172 aa).

The protein belongs to the hcp1 family.

It is found in the secreted. The protein is Major exported protein (hcpA) of Pseudomonas aeruginosa (strain ATCC 15692 / DSM 22644 / CIP 104116 / JCM 14847 / LMG 12228 / 1C / PRS 101 / PAO1).